The chain runs to 314 residues: MNSYLEFEKPVAQLEARIAELRSAAEGDEVDISNELKRLERKSAALLTSTYSALTPWQKTQVARHPQRPHFRDFVKHAFDEFVPLGGDRNYGEDEAIMGGLATLRGRKVVLIGHEKGNDTESRLRHNFGMGKPEGYRKAIRLMDLAGRFGLPVVTLVDTSGAFPGVEAEERGQAEAIARSTEACLALPVPMVATIVGEGGSGGAVALASAERVLMLEHAVYSVISPEGCASILWRTAEKAPDAAEAMKVTAQHLLDLKVIDRIVKEPTGGAHRDPSAICETLANAIDEELDALADLPGETLRRMREERFLQIGG.

The region spanning 38–292 (RLERKSAALL…ANAIDEELDA (255 aa)) is the CoA carboxyltransferase C-terminal domain.

This sequence belongs to the AccA family. As to quaternary structure, acetyl-CoA carboxylase is a heterohexamer composed of biotin carboxyl carrier protein (AccB), biotin carboxylase (AccC) and two subunits each of ACCase subunit alpha (AccA) and ACCase subunit beta (AccD).

The protein localises to the cytoplasm. The catalysed reaction is N(6)-carboxybiotinyl-L-lysyl-[protein] + acetyl-CoA = N(6)-biotinyl-L-lysyl-[protein] + malonyl-CoA. It participates in lipid metabolism; malonyl-CoA biosynthesis; malonyl-CoA from acetyl-CoA: step 1/1. In terms of biological role, component of the acetyl coenzyme A carboxylase (ACC) complex. First, biotin carboxylase catalyzes the carboxylation of biotin on its carrier protein (BCCP) and then the CO(2) group is transferred by the carboxyltransferase to acetyl-CoA to form malonyl-CoA. This is Acetyl-coenzyme A carboxylase carboxyl transferase subunit alpha from Erythrobacter litoralis (strain HTCC2594).